Here is an 89-residue protein sequence, read N- to C-terminus: Protein FAM25A (89 aa).

Belongs to the FAM25 family.

This chain is Protein FAM25A, found in Mus musculus (Mouse).